Consider the following 217-residue polypeptide: Snake venom metalloproteinase lebetase-4 (217 aa).

The propeptide occupies 1–14 (SCRKKASQLNLTPE). Gln15 is modified (pyrrolidone carboxylic acid). In terms of domain architecture, Peptidase M12B spans 21–217 (RYIELVIVAD…HNPQCILNQP (197 aa)). Positions 24 and 108 each coordinate Ca(2+). Disulfide bonds link Cys132–Cys212, Cys172–Cys196, and Cys174–Cys179. His157 contacts Zn(2+). Residue Glu158 is part of the active site. Positions 161 and 167 each coordinate Zn(2+). Cys212 and Asn215 together coordinate Ca(2+).

Belongs to the venom metalloproteinase (M12B) family. P-I subfamily. In terms of assembly, monomer. Zn(2+) is required as a cofactor. In terms of tissue distribution, expressed by the venom gland.

The protein localises to the secreted. Fibrinolytic and caseinolytic activities are inhibited by Cd(2+), Cu(2+) and Co(2+) ions. Not inhibited by Mg(2+), Ca(2+) and Ba(2+). Also inhibited by EDTA, EGTA and 1,10-phenanthroline. Its function is as follows. Snake venom zinc metalloprotease that hydrolyzes the Aalpha-chain and more slowly the Bbeta-chain of fibrin and fibrinogen. Also hydrolyzes casein and B-chain of oxidized insulin. Its fibrinolytic activity is direct, without any plasminogen activation. Inhibits ADP-induced and collagen-induced platelet aggregation. Shows low hemorrhagic activity. Cleaves the plasma proteinase inhibitors alpha(2)-macroglobulin (A2M) and alpha(2)M-related pregnancy zone protein (PZP), and is inhibited by them. The chain is Snake venom metalloproteinase lebetase-4 from Macrovipera lebetinus (Levantine viper).